A 134-amino-acid polypeptide reads, in one-letter code: MEKSLHLEIVTPDKLVLSEQVDYVGAPGFEGEFGVLPSHIPFLSALAIGSLYYKANGKTHHVFVSGGFAEVSDNKVTVLAESAERAEDIDIDRARKAKDRAEQRLAQIKEKVDHARAQAALQRALARMRVRGNA.

It belongs to the ATPase epsilon chain family. F-type ATPases have 2 components, CF(1) - the catalytic core - and CF(0) - the membrane proton channel. CF(1) has five subunits: alpha(3), beta(3), gamma(1), delta(1), epsilon(1). CF(0) has three main subunits: a, b and c.

The protein resides in the cell inner membrane. Produces ATP from ADP in the presence of a proton gradient across the membrane. This is ATP synthase epsilon chain from Nitratidesulfovibrio vulgaris (strain ATCC 29579 / DSM 644 / CCUG 34227 / NCIMB 8303 / VKM B-1760 / Hildenborough) (Desulfovibrio vulgaris).